Here is a 460-residue protein sequence, read N- to C-terminus: Bifunctional beta-D-glucosidase/beta-D-fucosidase (460 aa).

Residue glutamate 168 is the Proton donor of the active site. The Nucleophile role is filled by glutamate 362.

Belongs to the glycosyl hydrolase 1 family. As to quaternary structure, monomer.

The protein resides in the secreted. The catalysed reaction is Hydrolysis of terminal, non-reducing beta-D-glucosyl residues with release of beta-D-glucose.. The enzyme catalyses Hydrolysis of terminal non-reducing beta-D-fucose residues in beta-D-fucosides.. Its activity is regulated as follows. Inhibited by Cu(2+), Ag(+) and Hg(+), but not by other cations such as Mg(2+), Ca(2+), Mn(2+) and Co(2+). Inhibited by 1-amino-1-deoxy-D-glucose and p-chloromercuribenzoic acid, but not by EDTA or dithiothreitol. Inhibited by the disaccharides sucrose, lactose and cellobiose. The monosaccharides D-fructose, D-mannose, D-xylose and D-glucose increase the beta-D-fucosidase activity, but not the beta-D-glucosidase activity. D-glucose inhibits the beta-D-glucosidase activity, but promotes the beta-D-fucosidase activity. D-fucose inhibits the beta-D-glucosidase activity and does not significantly affect the beta-D-fucosidase activity. Bifunctional beta-D-glucosidase/beta-D-fucosidase. Activity towards pNP-beta-D-fucoside is about 80-85% of the activity towards pNP-beta-D-glucoside. Also has slight activity (less than 10%) towards pNP-beta-D-galactoside, and very low activity (less than 1%) towards pNP-beta-D-xyloside. Hydrolyzes laminaribiose, sophorose, cellobiose and gentobiose. Not active against maltose, pNP-alpha-D-glucoside or pNP-beta-L-fucoside. This chain is Bifunctional beta-D-glucosidase/beta-D-fucosidase, found in Bifidobacterium breve.